The primary structure comprises 269 residues: Small ribosomal subunit protein uS3m (269 aa).

This sequence belongs to the universal ribosomal protein uS3 family.

Its subcellular location is the mitochondrion. Its function is as follows. Essential for mitochondrial protein synthesis and required for the maturation of small ribosomal subunits. This Monosporozyma servazzii (Yeast) protein is Small ribosomal subunit protein uS3m (VAR1).